The chain runs to 346 residues: Aldose 1-epimerase (346 aa).

Residue Arg-79 participates in substrate binding. Catalysis depends on His-175, which acts as the Proton donor. Asp-245 lines the substrate pocket. Catalysis depends on Glu-309, which acts as the Proton acceptor.

It belongs to the aldose epimerase family.

Its subcellular location is the cytoplasm. The catalysed reaction is alpha-D-glucose = beta-D-glucose. It functions in the pathway carbohydrate metabolism; hexose metabolism. Its function is as follows. Mutarotase converts alpha-aldose to the beta-anomer. It is active on D-glucose, L-arabinose, D-xylose, D-galactose, maltose and lactose. The chain is Aldose 1-epimerase (galM) from Escherichia coli (strain K12).